Here is a 226-residue protein sequence, read N- to C-terminus: Thiamine-phosphate synthase (226 aa).

Residues 46-50 (QFRDK) and aspartate 83 each bind 4-amino-2-methyl-5-(diphosphooxymethyl)pyrimidine. Mg(2+) contacts are provided by aspartate 84 and aspartate 103. Serine 122 contributes to the 4-amino-2-methyl-5-(diphosphooxymethyl)pyrimidine binding site. Residue 149–151 (TQS) coordinates 2-[(2R,5Z)-2-carboxy-4-methylthiazol-5(2H)-ylidene]ethyl phosphate. A 4-amino-2-methyl-5-(diphosphooxymethyl)pyrimidine-binding site is contributed by lysine 152. Residues glycine 181 and 201–202 (IT) each bind 2-[(2R,5Z)-2-carboxy-4-methylthiazol-5(2H)-ylidene]ethyl phosphate.

The protein belongs to the thiamine-phosphate synthase family. Mg(2+) is required as a cofactor.

The enzyme catalyses 2-[(2R,5Z)-2-carboxy-4-methylthiazol-5(2H)-ylidene]ethyl phosphate + 4-amino-2-methyl-5-(diphosphooxymethyl)pyrimidine + 2 H(+) = thiamine phosphate + CO2 + diphosphate. The catalysed reaction is 2-(2-carboxy-4-methylthiazol-5-yl)ethyl phosphate + 4-amino-2-methyl-5-(diphosphooxymethyl)pyrimidine + 2 H(+) = thiamine phosphate + CO2 + diphosphate. It catalyses the reaction 4-methyl-5-(2-phosphooxyethyl)-thiazole + 4-amino-2-methyl-5-(diphosphooxymethyl)pyrimidine + H(+) = thiamine phosphate + diphosphate. Its pathway is cofactor biosynthesis; thiamine diphosphate biosynthesis; thiamine phosphate from 4-amino-2-methyl-5-diphosphomethylpyrimidine and 4-methyl-5-(2-phosphoethyl)-thiazole: step 1/1. Functionally, condenses 4-methyl-5-(beta-hydroxyethyl)thiazole monophosphate (THZ-P) and 2-methyl-4-amino-5-hydroxymethyl pyrimidine pyrophosphate (HMP-PP) to form thiamine monophosphate (TMP). This Haemophilus influenzae (strain ATCC 51907 / DSM 11121 / KW20 / Rd) protein is Thiamine-phosphate synthase.